The primary structure comprises 173 residues: Shikimate kinase 1 (173 aa).

Glycine 14 to threonine 19 lines the ATP pocket. Residue serine 18 participates in Mg(2+) binding. Residues aspartate 36, arginine 60, and glycine 82 each contribute to the substrate site. ATP is bound at residue arginine 120. Residue arginine 140 coordinates substrate. Position 157 (glutamine 157) interacts with ATP.

Belongs to the shikimate kinase family. As to quaternary structure, monomer. The cofactor is Mg(2+).

It is found in the cytoplasm. The enzyme catalyses shikimate + ATP = 3-phosphoshikimate + ADP + H(+). Its pathway is metabolic intermediate biosynthesis; chorismate biosynthesis; chorismate from D-erythrose 4-phosphate and phosphoenolpyruvate: step 5/7. Catalyzes the specific phosphorylation of the 3-hydroxyl group of shikimic acid using ATP as a cosubstrate. The polypeptide is Shikimate kinase 1 (Enterobacter sp. (strain 638)).